A 119-amino-acid polypeptide reads, in one-letter code: Large ribosomal subunit protein uL18 (119 aa).

This sequence belongs to the universal ribosomal protein uL18 family. Part of the 50S ribosomal subunit; part of the 5S rRNA/L5/L18/L25 subcomplex. Contacts the 5S and 23S rRNAs.

Functionally, this is one of the proteins that bind and probably mediate the attachment of the 5S RNA into the large ribosomal subunit, where it forms part of the central protuberance. The protein is Large ribosomal subunit protein uL18 of Nitratidesulfovibrio vulgaris (strain DP4) (Desulfovibrio vulgaris).